Consider the following 147-residue polypeptide: Large ribosomal subunit protein uL13 (147 aa).

Belongs to the universal ribosomal protein uL13 family. As to quaternary structure, part of the 50S ribosomal subunit.

Functionally, this protein is one of the early assembly proteins of the 50S ribosomal subunit, although it is not seen to bind rRNA by itself. It is important during the early stages of 50S assembly. The chain is Large ribosomal subunit protein uL13 from Kocuria rhizophila (strain ATCC 9341 / DSM 348 / NBRC 103217 / DC2201).